Consider the following 878-residue polypeptide: Alanine--tRNA ligase (878 aa).

Residues H566, H570, C668, and H672 each contribute to the Zn(2+) site. Residues 846–866 (GGGRPDMAQAGGKQPEKLEEA) form a disordered region.

Belongs to the class-II aminoacyl-tRNA synthetase family. Zn(2+) is required as a cofactor.

It is found in the cytoplasm. It carries out the reaction tRNA(Ala) + L-alanine + ATP = L-alanyl-tRNA(Ala) + AMP + diphosphate. Its function is as follows. Catalyzes the attachment of alanine to tRNA(Ala) in a two-step reaction: alanine is first activated by ATP to form Ala-AMP and then transferred to the acceptor end of tRNA(Ala). Also edits incorrectly charged Ser-tRNA(Ala) and Gly-tRNA(Ala) via its editing domain. The sequence is that of Alanine--tRNA ligase from Bacillus pumilus (strain SAFR-032).